The chain runs to 319 residues: Aspartate carbamoyltransferase catalytic subunit (319 aa).

2 residues coordinate carbamoyl phosphate: arginine 65 and threonine 66. Lysine 93 provides a ligand contact to L-aspartate. Positions 115, 149, and 152 each coordinate carbamoyl phosphate. L-aspartate-binding residues include arginine 182 and arginine 237. 2 residues coordinate carbamoyl phosphate: glycine 278 and proline 279.

Belongs to the aspartate/ornithine carbamoyltransferase superfamily. ATCase family. As to quaternary structure, heterododecamer (2C3:3R2) of six catalytic PyrB chains organized as two trimers (C3), and six regulatory PyrI chains organized as three dimers (R2).

It catalyses the reaction carbamoyl phosphate + L-aspartate = N-carbamoyl-L-aspartate + phosphate + H(+). It functions in the pathway pyrimidine metabolism; UMP biosynthesis via de novo pathway; (S)-dihydroorotate from bicarbonate: step 2/3. In terms of biological role, catalyzes the condensation of carbamoyl phosphate and aspartate to form carbamoyl aspartate and inorganic phosphate, the committed step in the de novo pyrimidine nucleotide biosynthesis pathway. This Dechloromonas aromatica (strain RCB) protein is Aspartate carbamoyltransferase catalytic subunit.